The primary structure comprises 207 residues: Large ribosomal subunit protein uL4 (207 aa).

The tract at residues 52–75 (KNRSAVRGGGKKPWRQKGTGRARQ) is disordered. Basic residues predominate over residues 60–71 (GGKKPWRQKGTG).

The protein belongs to the universal ribosomal protein uL4 family. Part of the 50S ribosomal subunit.

In terms of biological role, one of the primary rRNA binding proteins, this protein initially binds near the 5'-end of the 23S rRNA. It is important during the early stages of 50S assembly. It makes multiple contacts with different domains of the 23S rRNA in the assembled 50S subunit and ribosome. Its function is as follows. Forms part of the polypeptide exit tunnel. The sequence is that of Large ribosomal subunit protein uL4 from Limosilactobacillus fermentum (strain NBRC 3956 / LMG 18251) (Lactobacillus fermentum).